The following is a 283-amino-acid chain: Acetylglutamate kinase (283 aa).

Substrate-binding positions include 63–64, arginine 85, and asparagine 178; that span reads GG.

Belongs to the acetylglutamate kinase family. ArgB subfamily.

It is found in the cytoplasm. It carries out the reaction N-acetyl-L-glutamate + ATP = N-acetyl-L-glutamyl 5-phosphate + ADP. The protein operates within amino-acid biosynthesis; L-arginine biosynthesis; N(2)-acetyl-L-ornithine from L-glutamate: step 2/4. In terms of biological role, catalyzes the ATP-dependent phosphorylation of N-acetyl-L-glutamate. The polypeptide is Acetylglutamate kinase (Prochlorococcus marinus (strain MIT 9515)).